The chain runs to 144 residues: Transcription antitermination protein NusB (144 aa).

The protein belongs to the NusB family.

Its function is as follows. Involved in transcription antitermination. Required for transcription of ribosomal RNA (rRNA) genes. Binds specifically to the boxA antiterminator sequence of the ribosomal RNA (rrn) operons. The sequence is that of Transcription antitermination protein NusB from Pasteurella multocida (strain Pm70).